Here is a 128-residue protein sequence, read N- to C-terminus: Gene 64 protein (128 aa).

In Mycobacterium phage L5 (Mycobacteriophage L5), this protein is Gene 64 protein (64).